Consider the following 151-residue polypeptide: UPF0178 protein YaiI (151 aa).

This sequence belongs to the UPF0178 family.

The polypeptide is UPF0178 protein YaiI (Salmonella agona (strain SL483)).